The sequence spans 819 residues: Ion-translocating oxidoreductase complex subunit C (819 aa).

2 4Fe-4S ferredoxin-type domains span residues 368 to 398 (EYAEPEAEQACIRCSSCSDACPVNLMPQQLY) and 408 to 437 (KSEEYALKDCIECGICAYVCPSHIPLIQYF). 8 residues coordinate [4Fe-4S] cluster: C378, C381, C384, C388, C417, C420, C423, and C427. 2 stretches are compositionally biased toward basic and acidic residues: residues 465-477 (QARMEREEQERKA) and 485-513 (ARREELAQTKGEDPVKAALERLKAKKANE). Disordered stretches follow at residues 465–568 (QARM…NAKK), 580–677 (AKKL…TALD), and 692–793 (AKKL…PKKA). Composition is skewed to polar residues over residues 554 to 565 (VENQEQQTQPTN) and 587 to 601 (NSTSEAISNSQTAEN). Over residues 602–614 (QVEKTKSAVEKTQ) the composition is skewed to basic and acidic residues. Positions 641–656 (QTNSTSEAISNSQTAE) are enriched in polar residues. Residues 658-671 (EVEKTKSAVEKTEE) are compositionally biased toward basic and acidic residues. Composition is skewed to polar residues over residues 699–712 (NSASEAISNSQTAE) and 755–768 (NSTSEAISNSQTAE). Over residues 770-782 (EVEKTKSAVEKTQ) the composition is skewed to basic and acidic residues.

The protein belongs to the 4Fe4S bacterial-type ferredoxin family. RnfC subfamily. As to quaternary structure, the complex is composed of six subunits: RnfA, RnfB, RnfC, RnfD, RnfE and RnfG. It depends on [4Fe-4S] cluster as a cofactor.

Its subcellular location is the cell inner membrane. Part of a membrane-bound complex that couples electron transfer with translocation of ions across the membrane. This Haemophilus influenzae (strain ATCC 51907 / DSM 11121 / KW20 / Rd) protein is Ion-translocating oxidoreductase complex subunit C.